The primary structure comprises 130 residues: Abscisic acid and environmental stress-inducible protein TAS14 (130 aa).

Positions 1-130 are disordered; the sequence is MAQYGNQDQM…KIKDKIPGMH (130 aa). Residues 27–58 show a composition bias toward gly residues; sequence QGTGTGGMMGGTGTGGMMGGTGGEYGTQGMGT. 2 stretches are compositionally biased toward basic and acidic residues: residues 61-73 and 92-130; these read HHHE…RRSD and KEKI…PGMH.

The protein belongs to the plant dehydrin family.

The protein is Abscisic acid and environmental stress-inducible protein TAS14 (TAS14) of Solanum lycopersicum (Tomato).